Here is a 366-residue protein sequence, read N- to C-terminus: Histidinol-phosphate aminotransferase 2 (366 aa).

The span at 1–11 (MQVKDQLSSLQ) shows a compositional bias: polar residues. A disordered region spans residues 1–21 (MQVKDQLSSLQPYKPGKSPEQ). Position 222 is an N6-(pyridoxal phosphate)lysine (K222).

This sequence belongs to the class-II pyridoxal-phosphate-dependent aminotransferase family. Histidinol-phosphate aminotransferase subfamily. Homodimer. Pyridoxal 5'-phosphate serves as cofactor.

It carries out the reaction L-histidinol phosphate + 2-oxoglutarate = 3-(imidazol-4-yl)-2-oxopropyl phosphate + L-glutamate. Its pathway is amino-acid biosynthesis; L-histidine biosynthesis; L-histidine from 5-phospho-alpha-D-ribose 1-diphosphate: step 7/9. This Bacillus thuringiensis subsp. konkukian (strain 97-27) protein is Histidinol-phosphate aminotransferase 2.